A 427-amino-acid polypeptide reads, in one-letter code: Serine--tRNA ligase (427 aa).

Residue 229–231 (TAE) coordinates L-serine. ATP is bound at residue 260 to 262 (RSE). Residue E283 coordinates L-serine. Residue 347–350 (EISS) coordinates ATP. An L-serine-binding site is contributed by S383.

It belongs to the class-II aminoacyl-tRNA synthetase family. Type-1 seryl-tRNA synthetase subfamily. As to quaternary structure, homodimer. The tRNA molecule binds across the dimer.

It localises to the cytoplasm. The catalysed reaction is tRNA(Ser) + L-serine + ATP = L-seryl-tRNA(Ser) + AMP + diphosphate + H(+). It catalyses the reaction tRNA(Sec) + L-serine + ATP = L-seryl-tRNA(Sec) + AMP + diphosphate + H(+). It participates in aminoacyl-tRNA biosynthesis; selenocysteinyl-tRNA(Sec) biosynthesis; L-seryl-tRNA(Sec) from L-serine and tRNA(Sec): step 1/1. Its function is as follows. Catalyzes the attachment of serine to tRNA(Ser). Is also able to aminoacylate tRNA(Sec) with serine, to form the misacylated tRNA L-seryl-tRNA(Sec), which will be further converted into selenocysteinyl-tRNA(Sec). This Oleidesulfovibrio alaskensis (strain ATCC BAA-1058 / DSM 17464 / G20) (Desulfovibrio alaskensis) protein is Serine--tRNA ligase.